The following is a 175-amino-acid chain: Centrosomal protein 20 (175 aa).

The segment at 1 to 104 is necessary and sufficient for homooligomerization and localization to centrosomes and pericentriolar satellites; that stretch reads MATIAELKAV…IVEDANGKSV (104 aa). The LisH domain occupies 49 to 81; that stretch reads ENLLINELIREYLEFNKYKYSASVLTAEAGQPE. Positions 137-166 are disordered; it reads RQNLAKPSTERNQKDRIPEPGRMAGTSIEE. The span at 144 to 155 shows a compositional bias: basic and acidic residues; sequence STERNQKDRIPE.

This sequence belongs to the CEP43 family. In terms of assembly, homooligomer; probably required for localization to centrosomes.

Its subcellular location is the cell projection. The protein localises to the cilium. It is found in the cytoplasm. It localises to the cytoskeleton. The protein resides in the cilium basal body. Its subcellular location is the microtubule organizing center. The protein localises to the centrosome. It is found in the cytoplasmic granule. It localises to the centriolar satellite. Involved in the biogenesis of cilia. Required for the recruitment of PLK1 to centrosomes and S phase progression. The sequence is that of Centrosomal protein 20 (CEP20) from Gallus gallus (Chicken).